A 603-amino-acid polypeptide reads, in one-letter code: F-box only protein 46 (603 aa).

The tract at residues 18 to 54 (SKYSQNQPRPPSTALKPPVCPDTSSGTEPDHRPAHLE) is disordered. Residues S21 and S67 each carry the phosphoserine modification. Disordered regions lie at residues 113 to 165 (SRAS…SSGD), 235 to 301 (EAQR…TRAK), 332 to 359 (EASEGETPAPTRPEDTPPAPPPPPARDC), and 412 to 442 (QSRGPEGPPEPPPADIPSTVPGPDDSEGTTD). T347 is modified (phosphothreonine). Composition is skewed to pro residues over residues 347–356 (TPPAPPPPPA) and 417–426 (EGPPEPPPAD). Residues 470–522 (RQYMLLLPEHVLVKIFSFLPTRALAALKCTCHHFKGIIEAFGVRATDSRWSRD) enclose the F-box domain.

As to quaternary structure, part of a SCF (SKP1-cullin-F-box) protein ligase complex SCF(FBXO46) composed of CUL1, SKP1, RBX1 and FBXO46. In terms of processing, phosphorylated by ATM in response to DNA damage, promoting ubiquitination and degradation by the SCF(FBXO31) complex. Post-translationally, ATM-phosphorylated FBXO46 is ubiquitinated and degradaded by the SCF(FBXO31) complex in response to DNA damage.

It participates in protein modification; protein ubiquitination. Substrate-recognition component of the SCF(FBXO46) protein ligase complex, which mediates the ubiquitination and degradation of target proteins. In absence of stress, the SCF(FBXO46) complex catalyzes ubiquitination and degradation of MTOR-phosphorylated FBXO31. This chain is F-box only protein 46 (Fbxo46), found in Mus musculus (Mouse).